We begin with the raw amino-acid sequence, 197 residues long: NADH-quinone oxidoreductase subunit C (197 aa).

Belongs to the complex I 30 kDa subunit family. In terms of assembly, NDH-1 is composed of 14 different subunits. Subunits NuoB, C, D, E, F, and G constitute the peripheral sector of the complex.

Its subcellular location is the cell inner membrane. It carries out the reaction a quinone + NADH + 5 H(+)(in) = a quinol + NAD(+) + 4 H(+)(out). Its function is as follows. NDH-1 shuttles electrons from NADH, via FMN and iron-sulfur (Fe-S) centers, to quinones in the respiratory chain. The immediate electron acceptor for the enzyme in this species is believed to be ubiquinone. Couples the redox reaction to proton translocation (for every two electrons transferred, four hydrogen ions are translocated across the cytoplasmic membrane), and thus conserves the redox energy in a proton gradient. This is NADH-quinone oxidoreductase subunit C from Neisseria meningitidis serogroup C (strain 053442).